A 274-amino-acid polypeptide reads, in one-letter code: Sulfur carrier protein FdhD (274 aa).

C121 serves as the catalytic Cysteine persulfide intermediate. Mo-bis(molybdopterin guanine dinucleotide) is bound at residue 258-263 (FSKPGR).

This sequence belongs to the FdhD family.

It is found in the cytoplasm. Required for formate dehydrogenase (FDH) activity. Acts as a sulfur carrier protein that transfers sulfur from IscS to the molybdenum cofactor prior to its insertion into FDH. This chain is Sulfur carrier protein FdhD, found in Yersinia pseudotuberculosis serotype IB (strain PB1/+).